A 317-amino-acid chain; its full sequence is Olfactory receptor 1B1 (317 aa).

Residues 1–29 lie on the Extracellular side of the membrane; the sequence is MSFAPNASHSPVFLLLGFSRANISYTLLF. Residues Asn6 and Asn22 are each glycosylated (N-linked (GlcNAc...) asparagine). A helical membrane pass occupies residues 30–50; sequence FLFLAIYLTTILGNVTLVLLI. Residues 51–66 lie on the Cytoplasmic side of the membrane; it reads SWDSRLHSPMYYLLRG. The helical transmembrane segment at 67–87 threads the bilayer; sequence LSVIDMGLSTVTLPQLLAHLV. The Extracellular segment spans residues 88 to 98; the sequence is SHYPTIPAARC. The cysteines at positions 98 and 184 are disulfide-linked. The chain crosses the membrane as a helical span at residues 99 to 119; the sequence is LAQFFFFYAFGVTDTLVIAVM. At 120–144 the chain is on the cytoplasmic side; the sequence is ALDRYVAICDPLHYALVMNHQRCAC. Residues 145-165 traverse the membrane as a helical segment; the sequence is LLALSWVVSILHTMLRVGLVL. Topologically, residues 166 to 201 are extracellular; sequence PLCWTGDAGGNVNLPHFFCDHRPLLRASCSDIHSNE. Residues 202–222 form a helical membrane-spanning segment; it reads LAIFFEGGFLMLGPCALIVLS. Over 223 to 248 the chain is Cytoplasmic; the sequence is YVRIGAAILRLPSAAGRRRAVSTCGS. Residues 249-269 form a helical membrane-spanning segment; that stretch reads HLTMVGFLYGTIICVYFQPPF. Topologically, residues 270–276 are extracellular; it reads QNSQYQD. The helical transmembrane segment at 277–297 threads the bilayer; that stretch reads MVASVMYTAITPLANPFVYSL. Topologically, residues 298–317 are cytoplasmic; sequence HNKDVKGALCRLLEWVKVDP.

This sequence belongs to the G-protein coupled receptor 1 family.

The protein localises to the cell membrane. In terms of biological role, odorant receptor. The polypeptide is Olfactory receptor 1B1 (OR1B1) (Homo sapiens (Human)).